Reading from the N-terminus, the 158-residue chain is 6,7-dimethyl-8-ribityllumazine synthase 2 (158 aa).

5-amino-6-(D-ribitylamino)uracil-binding positions include Trp20, 54–56, and 78–80; these read AYE and FVI. Arg86 acts as the Proton donor in catalysis. Residue Ser111 participates in 5-amino-6-(D-ribitylamino)uracil binding. A (2S)-2-hydroxy-3-oxobutyl phosphate-binding site is contributed by His125.

This sequence belongs to the DMRL synthase family. Homodecamer, arranged as a dimer of pentamers.

The protein localises to the cytoplasm. It catalyses the reaction (2S)-2-hydroxy-3-oxobutyl phosphate + 5-amino-6-(D-ribitylamino)uracil = 6,7-dimethyl-8-(1-D-ribityl)lumazine + phosphate + 2 H2O + H(+). It functions in the pathway cofactor biosynthesis; riboflavin biosynthesis; riboflavin from 2-hydroxy-3-oxobutyl phosphate and 5-amino-6-(D-ribitylamino)uracil: step 1/2. Its function is as follows. Catalyzes the formation of 6,7-dimethyl-8-ribityllumazine by condensation of 5-amino-6-(D-ribitylamino)uracil with 3,4-dihydroxy-2-butanone 4-phosphate. This is the penultimate step in the biosynthesis of riboflavin. The isozyme RibH2 but not RibH1 is essential for Brucella intracellular survival and replication inside macrophages or in mice. Displays low catalytic activity in comparison with the isozyme RibH1. Is a highly immunogenic protein. Activates dendritic cells (DCs) in vitro, increasing the levels of costimulatory molecules and the secretion of pro-inflammatory cytokines, and recruits DCs, B cells and CD8+ T cells in vivo, both effects in a TLR4-dependent manner. Induces the cross presentation of covalently attached peptides and generates a strong and long-lasting humoral immune response without adjuvants; TLR4 signaling is necessary for the induction of the cytotoxic response but not for antigen cross presentation. Elicits a TLR4-mediated protective response against B16 melanoma in mice, slowing tumor growth and prolonging mice survival. The chain is 6,7-dimethyl-8-ribityllumazine synthase 2 from Brucella abortus (strain 2308).